Here is a 330-residue protein sequence, read N- to C-terminus: Ribosomal RNA small subunit methyltransferase C (330 aa).

Belongs to the methyltransferase superfamily. RsmC family. In terms of assembly, monomer.

Its subcellular location is the cytoplasm. It carries out the reaction guanosine(1207) in 16S rRNA + S-adenosyl-L-methionine = N(2)-methylguanosine(1207) in 16S rRNA + S-adenosyl-L-homocysteine + H(+). Specifically methylates the guanine in position 1207 of 16S rRNA in the 30S particle. In Haemophilus influenzae (strain ATCC 51907 / DSM 11121 / KW20 / Rd), this protein is Ribosomal RNA small subunit methyltransferase C.